Reading from the N-terminus, the 469-residue chain is Alpha-2C adrenergic receptor (469 aa).

A disordered region spans residues Met1 to Ser29. Residues Met1–Val36 are Extracellular-facing. N-linked (GlcNAc...) asparagine glycosylation is found at Asn8 and Asn20. A helical transmembrane segment spans residues Ala37–Leu62. At Thr63 to Leu73 the chain is on the cytoplasmic side. The chain crosses the membrane as a helical span at residues Phe74–Met99. The Extracellular segment spans residues Asn100–Cys109. A disulfide bond links Cys109 and Cys187. Residues Val110–Leu132 form a helical membrane-spanning segment. The Cytoplasmic portion of the chain corresponds to Asp133–Lys154. Residues Gly155–Leu175 form a helical membrane-spanning segment. Topologically, residues Tyr176 to Trp194 are extracellular. The helical transmembrane segment at Tyr195 to Val216 threads the bilayer. Residues Arg217–Arg386 lie on the Cytoplasmic side of the membrane. Disordered stretches follow at residues Lys232–Ala261 and His279–Ser353. Residues His279 to Arg296 show a composition bias toward basic residues. Residues Leu301 to Ser310 show a composition bias toward acidic residues. Residues Arg331–Ser353 show a composition bias toward low complexity. Residues Phe387–Phe407 traverse the membrane as a helical segment. The Extracellular segment spans residues Thr408–Lys427. Residues Phe428–Asn448 traverse the membrane as a helical segment. Residues Gln449–Gln469 are Cytoplasmic-facing.

It belongs to the G-protein coupled receptor 1 family. Adrenergic receptor subfamily. ADRA2C sub-subfamily.

Its subcellular location is the cell membrane. Functionally, alpha-2 adrenergic receptors mediate the catecholamine-induced inhibition of adenylate cyclase through the action of G proteins. The polypeptide is Alpha-2C adrenergic receptor (ADRA2C) (Didelphis virginiana (North American opossum)).